The primary structure comprises 281 residues: NADPH-dependent 7-cyano-7-deazaguanine reductase (281 aa).

88-90 (IES) lines the substrate pocket. 90 to 91 (SK) serves as a coordination point for NADPH. Residue cysteine 189 is the Thioimide intermediate of the active site. Residue aspartate 196 is the Proton donor of the active site. 228-229 (HE) is a binding site for substrate. An NADPH-binding site is contributed by 257-258 (RG).

This sequence belongs to the GTP cyclohydrolase I family. QueF type 2 subfamily. Homodimer.

The protein resides in the cytoplasm. The enzyme catalyses 7-aminomethyl-7-carbaguanine + 2 NADP(+) = 7-cyano-7-deazaguanine + 2 NADPH + 3 H(+). Its pathway is tRNA modification; tRNA-queuosine biosynthesis. Functionally, catalyzes the NADPH-dependent reduction of 7-cyano-7-deazaguanine (preQ0) to 7-aminomethyl-7-deazaguanine (preQ1). This chain is NADPH-dependent 7-cyano-7-deazaguanine reductase, found in Proteus mirabilis (strain HI4320).